The chain runs to 292 residues: 4-hydroxy-tetrahydrodipicolinate synthase (292 aa).

Thr-45 contributes to the pyruvate binding site. Tyr-133 functions as the Proton donor/acceptor in the catalytic mechanism. The Schiff-base intermediate with substrate role is filled by Lys-161. Residue Ile-203 coordinates pyruvate.

The protein belongs to the DapA family. As to quaternary structure, homodimer.

The protein localises to the cytoplasm. The enzyme catalyses L-aspartate 4-semialdehyde + pyruvate = (2S,4S)-4-hydroxy-2,3,4,5-tetrahydrodipicolinate + H2O + H(+). Its pathway is amino-acid biosynthesis; L-lysine biosynthesis via DAP pathway; (S)-tetrahydrodipicolinate from L-aspartate: step 3/4. Catalyzes the condensation of (S)-aspartate-beta-semialdehyde [(S)-ASA] and pyruvate to 4-hydroxy-tetrahydrodipicolinate (HTPA). The protein is 4-hydroxy-tetrahydrodipicolinate synthase of Ectopseudomonas mendocina (strain ymp) (Pseudomonas mendocina).